Here is a 488-residue protein sequence, read N- to C-terminus: Cysteine--tRNA ligase (488 aa).

A Zn(2+)-binding site is contributed by cysteine 28. The 'HIGH' region signature appears at 30-40; that stretch reads PTVYDDAHLGH. The Zn(2+) site is built by cysteine 209, histidine 239, and glutamate 243. Positions 271 to 275 match the 'KMSKS' region motif; sequence KMSKS. Residue lysine 274 participates in ATP binding.

It belongs to the class-I aminoacyl-tRNA synthetase family. Monomer. It depends on Zn(2+) as a cofactor.

It is found in the cytoplasm. It catalyses the reaction tRNA(Cys) + L-cysteine + ATP = L-cysteinyl-tRNA(Cys) + AMP + diphosphate. This chain is Cysteine--tRNA ligase, found in Helicobacter hepaticus (strain ATCC 51449 / 3B1).